We begin with the raw amino-acid sequence, 469 residues long: Adenosylhomocysteinase (469 aa).

3 residues coordinate substrate: T63, D139, and E164. 165 to 167 (TTT) contributes to the NAD(+) binding site. The substrate site is built by K194 and D198. NAD(+) contacts are provided by residues N199, 228–233 (GYGDVG), E251, N300, 321–323 (IGH), and N375.

It belongs to the adenosylhomocysteinase family. Requires NAD(+) as cofactor.

Its subcellular location is the cytoplasm. The enzyme catalyses S-adenosyl-L-homocysteine + H2O = L-homocysteine + adenosine. It participates in amino-acid biosynthesis; L-homocysteine biosynthesis; L-homocysteine from S-adenosyl-L-homocysteine: step 1/1. May play a key role in the regulation of the intracellular concentration of adenosylhomocysteine. The polypeptide is Adenosylhomocysteinase (Pseudomonas aeruginosa (strain LESB58)).